The following is an 83-amino-acid chain: uncharacterized protein (83 aa).

A helical membrane pass occupies residues 58–78; it reads AVLLWIAIIATLGNIVVVGVV.

It is found in the membrane. This is an uncharacterized protein from Homo sapiens (Human).